The primary structure comprises 427 residues: Stabilizer of axonemal microtubules 4 (427 aa).

Disordered stretches follow at residues Thr-82–Trp-105, Arg-273–Gln-298, and Gly-314–Gln-335. Composition is skewed to polar residues over residues Ala-287 to Gln-298 and Phe-321 to Ser-332.

In terms of assembly, microtubule inner protein component of sperm flagellar doublet microtubules. Interacts with PPP1CA.

Its subcellular location is the cell projection. It is found in the cilium. The protein localises to the cytoplasm. It localises to the cytoskeleton. The protein resides in the flagellum axoneme. The chain is Stabilizer of axonemal microtubules 4 from Mus musculus (Mouse).